Consider the following 67-residue polypeptide: Large ribosomal subunit protein uL29 (67 aa).

Belongs to the universal ribosomal protein uL29 family.

This is Large ribosomal subunit protein uL29 from Methanothrix thermoacetophila (strain DSM 6194 / JCM 14653 / NBRC 101360 / PT) (Methanosaeta thermophila).